Here is a 490-residue protein sequence, read N- to C-terminus: 4-hydroxybutyryl-CoA dehydratase/vinylacetyl-CoA-Delta-isomerase (490 aa).

[4Fe-4S] cluster is bound by residues Cys99 and Cys103. FAD is bound by residues 149–156 (MTDPKGDR) and 188–190 (HQT). Residues His292 and Cys299 each coordinate [4Fe-4S] cluster. FAD contacts are provided by residues His325 and 386–390 (DIAGG).

As to quaternary structure, homotetramer. Requires FAD as cofactor. It depends on [4Fe-4S] cluster as a cofactor.

It catalyses the reaction 4-hydroxybutanoyl-CoA = (2E)-butenoyl-CoA + H2O. The catalysed reaction is vinylacetyl-CoA = (2E)-butenoyl-CoA. Its function is as follows. Catalyzes the reversible conversion of 4-hydroxybutyryl-CoA to crotonyl-CoA. The mechanism of the reaction seems to go through three steps: (1) the FAD-dependent oxidation of 4-hydroxybutyryl-CoA to 4-hydroxycrotonyl-CoA; (2) the hydroxyl group is substituted by a hydride derived from the now reduced FAD in an SN2' reaction leading to vinylacetyl-CoA; (3) isomerization to yield crotonyl-CoA. The chain is 4-hydroxybutyryl-CoA dehydratase/vinylacetyl-CoA-Delta-isomerase (abfD) from Clostridium aminobutyricum.